Consider the following 347-residue polypeptide: UDP-3-O-acylglucosamine N-acyltransferase (347 aa).

His-240 functions as the Proton acceptor in the catalytic mechanism.

It belongs to the transferase hexapeptide repeat family. LpxD subfamily. In terms of assembly, homotrimer.

The enzyme catalyses a UDP-3-O-[(3R)-3-hydroxyacyl]-alpha-D-glucosamine + a (3R)-hydroxyacyl-[ACP] = a UDP-2-N,3-O-bis[(3R)-3-hydroxyacyl]-alpha-D-glucosamine + holo-[ACP] + H(+). Its pathway is bacterial outer membrane biogenesis; LPS lipid A biosynthesis. Functionally, catalyzes the N-acylation of UDP-3-O-acylglucosamine using 3-hydroxyacyl-ACP as the acyl donor. Is involved in the biosynthesis of lipid A, a phosphorylated glycolipid that anchors the lipopolysaccharide to the outer membrane of the cell. This chain is UDP-3-O-acylglucosamine N-acyltransferase, found in Hydrogenovibrio crunogenus (strain DSM 25203 / XCL-2) (Thiomicrospira crunogena).